Consider the following 252-residue polypeptide: Fructose-1,6-bisphosphatase/inositol-1-monophosphatase (252 aa).

Mg(2+) is bound by residues Asp38, Thr40, Glu67, Asp82, Leu84, and Asp85. Substrate-binding positions include 85–87, Arg167, Ala172, and Arg191; that span reads DGT. Position 200 (Asp200) interacts with Mg(2+).

Belongs to the inositol monophosphatase superfamily. FBPase class 4 family. In terms of assembly, homodimer. It depends on Mg(2+) as a cofactor. Mn(2+) serves as cofactor.

It carries out the reaction beta-D-fructose 1,6-bisphosphate + H2O = beta-D-fructose 6-phosphate + phosphate. The enzyme catalyses a myo-inositol phosphate + H2O = myo-inositol + phosphate. Its activity is regulated as follows. Both FBPase and IMPase activities are inhibited by Ca(2+). In contrast to mammalian I-1-P phosphatases, is only very weakly inhibited by Li(+) (with an IC(50) of about 290 mM). Functionally, phosphatase with broad specificity; it can dephosphorylate fructose 1,6-bisphosphate, both D and L isomers of inositol-1-phosphate (I-1-P), 2'-AMP, pNPP, inositol-2-phosphate, beta-glycerol phosphate, and alpha-D-glucose-1-phosphate. Cannot hydrolyze glucose-6-phosphate and fructose-6-phosphate. May be involved in the biosynthesis of a unique osmolyte, di-myo-inositol 1,1-phosphate. This chain is Fructose-1,6-bisphosphatase/inositol-1-monophosphatase (suhB), found in Archaeoglobus fulgidus (strain ATCC 49558 / DSM 4304 / JCM 9628 / NBRC 100126 / VC-16).